Here is an 86-residue protein sequence, read N- to C-terminus: Large ribosomal subunit protein uL23 (86 aa).

It belongs to the universal ribosomal protein uL23 family. Part of the 50S ribosomal subunit. Contacts protein L29.

Its function is as follows. Binds to 23S rRNA. One of the proteins that surrounds the polypeptide exit tunnel on the outside of the ribosome. This is Large ribosomal subunit protein uL23 from Methanococcus vannielii (strain ATCC 35089 / DSM 1224 / JCM 13029 / OCM 148 / SB).